Reading from the N-terminus, the 624-residue chain is DNA mismatch repair protein MutL (624 aa).

It belongs to the DNA mismatch repair MutL/HexB family.

In terms of biological role, this protein is involved in the repair of mismatches in DNA. It is required for dam-dependent methyl-directed DNA mismatch repair. May act as a 'molecular matchmaker', a protein that promotes the formation of a stable complex between two or more DNA-binding proteins in an ATP-dependent manner without itself being part of a final effector complex. The sequence is that of DNA mismatch repair protein MutL from Xanthomonas campestris pv. campestris (strain B100).